Reading from the N-terminus, the 97-residue chain is Defensin-like protein 301 (97 aa).

The first 24 residues, 1–24, serve as a signal peptide directing secretion; the sequence is MEKVTSIFFVLLLISSCLILRSQG. 6 disulfide bridges follow: Cys-28–Cys-47, Cys-34–Cys-53, Cys-39–Cys-55, Cys-65–Cys-84, Cys-71–Cys-92, and Cys-76–Cys-94.

It belongs to the DEFL family.

It localises to the secreted. The protein is Defensin-like protein 301 of Arabidopsis thaliana (Mouse-ear cress).